A 90-amino-acid chain; its full sequence is DNA-binding protein HU-alpha (90 aa).

This sequence belongs to the bacterial histone-like protein family. As to quaternary structure, heterodimer of an alpha and a beta chain.

Functionally, histone-like DNA-binding protein which is capable of wrapping DNA to stabilize it, and thus to prevent its denaturation under extreme environmental conditions. The sequence is that of DNA-binding protein HU-alpha (hupA) from Vibrio proteolyticus (Aeromonas proteolytica).